A 161-amino-acid chain; its full sequence is Transcriptional repressor NrdR (161 aa).

The segment covering 1–11 (MRCPSCNSLDT) has biased composition (polar residues). Residues 1-20 (MRCPSCNSLDTQVKDSRPTE) are disordered. A zinc finger lies at 3–34 (CPSCNSLDTQVKDSRPTEDSSVIRRRRVCVTC). The ATP-cone domain occupies 49–139 (LTVIKRNGRR…VYRNFREAKD (91 aa)).

This sequence belongs to the NrdR family. Zn(2+) is required as a cofactor.

Its function is as follows. Negatively regulates transcription of bacterial ribonucleotide reductase nrd genes and operons by binding to NrdR-boxes. The polypeptide is Transcriptional repressor NrdR (Bradyrhizobium sp. (strain BTAi1 / ATCC BAA-1182)).